The primary structure comprises 512 residues: Serine--tRNA ligase, cytoplasmic (512 aa).

Met1 carries the N-acetylmethionine modification. The segment at 9–61 (RVDKGGDPALIRETQEKRFKDPGLVDQLVKADSEWRRCRFRADNLNKLKNLCS) is interaction with tRNA. The residue at position 241 (Ser241) is a Phosphoserine. Residues Thr271 and Arg302 each contribute to the L-serine site. ATP is bound by residues 302–304 (RQE) and 318–321 (VHQF). At Lys323 the chain carries N6-acetyllysine. Glu325 is a binding site for L-serine. Residue 391 to 394 (ELVS) coordinates ATP. Asn427 serves as a coordination point for L-serine. The segment at 470-512 (FVKPAPIDQEPSKKQKKQHEGSKKKAKEVPLENQLQSMEVTEA) is disordered. Positions 479–499 (EPSKKQKKQHEGSKKKAKEVP) are enriched in basic and acidic residues. The short motif at 482 to 494 (KKQKKQHEGSKKK) is the Nuclear localization signal element. Residues 502 to 512 (NQLQSMEVTEA) are compositionally biased toward polar residues. Ser506 bears the Phosphoserine mark.

Belongs to the class-II aminoacyl-tRNA synthetase family. Type-1 seryl-tRNA synthetase subfamily. Homodimer. The tRNA molecule may bind across the dimer. Interacts with SIRT2. Interacts with METTL6; interaction is required for the tRNA N(3)-methylcytidine methyltransferase activity of METTL6.

It localises to the cytoplasm. Its subcellular location is the nucleus. The enzyme catalyses tRNA(Ser) + L-serine + ATP = L-seryl-tRNA(Ser) + AMP + diphosphate + H(+). It catalyses the reaction tRNA(Sec) + L-serine + ATP = L-seryl-tRNA(Sec) + AMP + diphosphate + H(+). It participates in aminoacyl-tRNA biosynthesis; selenocysteinyl-tRNA(Sec) biosynthesis; L-seryl-tRNA(Sec) from L-serine and tRNA(Sec): step 1/1. Catalyzes the attachment of serine to tRNA(Ser) in a two-step reaction: serine is first activated by ATP to form Ser-AMP and then transferred to the acceptor end of tRNA(Ser). Is probably also able to aminoacylate tRNA(Sec) with serine, to form the misacylated tRNA L-seryl-tRNA(Sec), which will be further converted into selenocysteinyl-tRNA(Sec). In the nucleus, binds to the VEGFA core promoter and prevents MYC binding and transcriptional activation by MYC. Recruits SIRT2 to the VEGFA promoter, promoting deacetylation of histone H4 at 'Lys-16' (H4K16). Thereby, inhibits the production of VEGFA and sprouting angiogenesis mediated by VEGFA. This is Serine--tRNA ligase, cytoplasmic (Sars1) from Mus musculus (Mouse).